Here is a 104-residue protein sequence, read N- to C-terminus: Large ribosomal subunit protein bL21 (104 aa).

Belongs to the bacterial ribosomal protein bL21 family. As to quaternary structure, part of the 50S ribosomal subunit. Contacts protein L20.

Functionally, this protein binds to 23S rRNA in the presence of protein L20. The chain is Large ribosomal subunit protein bL21 from Endomicrobium trichonymphae.